Reading from the N-terminus, the 513-residue chain is MPYLLEMKNITKTFGSVKAIDNVCLRLNAGEIVSLCGENGSGKSTLMKVLCGIYPHGSYEGEIIFAGEEIQASHIRDTERKGIAIIHQELALVKELTVLENIFLGNEITHNGIMDYDLMTLRCQKLLAQVSLSISPDTRVGDLGLGQQQLVEIAKALNKQVRLLILDEPTASLTEQETSILLDIIRDLQQHGIACIYISHKLNEVKAISDTICVIRDGQHIGTRDAAGMSEDDIITMMVGRELTALYPNEPHTTGDEILRIEHLTAWHPVNRHIKRVNDVSFSLKRGEILGIAGLVGAGRTETIQCLFGVWPGQWEGKIYIDGKQVDIRNCQQAIAQGIAMVPEDRKRDGIVPVMAVGKNITLAALNKFTGGISQLDDAAEQKCILESIQQLKVKTSSPDLAIGRLSGGNQQKAILARCLLLNPRILILDEPTRGIDIGAKYEIYKLINQLVQQGIAVIVISSELPEVLGLSDRVLVMHEGKLKANLINHNLTQEQVMEAALRSEHHVEKQSV.

ABC transporter domains lie at Leu5–Glu242 and Leu259–Glu505. Gly37 to Ser44 provides a ligand contact to ATP.

It belongs to the ABC transporter superfamily. Xylose importer (TC 3.A.1.2.4) family. The complex is composed of two ATP-binding proteins (XylG), two transmembrane proteins (XylH) and a solute-binding protein (XylF).

The protein localises to the cell inner membrane. The enzyme catalyses D-xylose(out) + ATP + H2O = D-xylose(in) + ADP + phosphate + H(+). Its function is as follows. Part of the ABC transporter complex XylFGH involved in xylose import. Responsible for energy coupling to the transport system. The XylFGH system can also transport ribose in absence of xylose. The chain is Xylose import ATP-binding protein XylG from Escherichia coli (strain K12).